The primary structure comprises 458 residues: Argininosuccinate lyase (458 aa).

The protein belongs to the lyase 1 family. Argininosuccinate lyase subfamily.

The protein resides in the cytoplasm. The catalysed reaction is 2-(N(omega)-L-arginino)succinate = fumarate + L-arginine. It participates in amino-acid biosynthesis; L-arginine biosynthesis; L-arginine from L-ornithine and carbamoyl phosphate: step 3/3. The chain is Argininosuccinate lyase from Anoxybacillus flavithermus (strain DSM 21510 / WK1).